A 1236-amino-acid chain; its full sequence is ABC transporter B family member 9 (1236 aa).

The ABC transmembrane type-1 1 domain occupies 33–320 (MTVGTIAAAG…TSPSLNAFAA (288 aa)). Helical transmembrane passes span 38–58 (IAAA…GQLI), 80–100 (FIYL…CWMV), 158–178 (QLLC…PLLA), 179–199 (GVLC…SLIM), 257–277 (ISGF…GLAV), and 288–308 (GYNG…GMSL). Residues 355–591 (IELKDVYFRY…PEGAYSQLVR (237 aa)) form the ABC transporter 1 domain. 390–397 (GQSGSGKS) serves as a coordination point for ATP. Asn542 carries an N-linked (GlcNAc...) asparagine glycan. Residues 593–616 (QEGSKEEATESERPETSLDVERSG) are disordered. The segment covering 594-616 (EGSKEEATESERPETSLDVERSG) has biased composition (basic and acidic residues). Residues Asn631 and Asn653 are each glycosylated (N-linked (GlcNAc...) asparagine). 6 helical membrane-spanning segments follow: residues 685 to 705 (VLVL…IFGL), 725 to 745 (SHFW…MIPV), 785 to 805 (SLVG…TTGL), 806 to 826 (IIAF…SPFI), 902 to 922 (FSFF…AGLI), and 927 to 947 (ATFG…IGVS). Residues 686 to 958 (LVLGSIAAMV…TSAMAPDSNK (273 aa)) enclose the ABC transmembrane type-1 2 domain. The ABC transporter 2 domain occupies 993 to 1230 (IEFRHVSFRY…SGGAYASLVT (238 aa)). 1028–1035 (GESGSGKS) contributes to the ATP binding site. Residues Asn1082 and Asn1181 are each glycosylated (N-linked (GlcNAc...) asparagine).

This sequence belongs to the ABC transporter superfamily. ABCB family. Multidrug resistance exporter (TC 3.A.1.201) subfamily.

Its subcellular location is the membrane. The chain is ABC transporter B family member 9 (ABCB9) from Arabidopsis thaliana (Mouse-ear cress).